The sequence spans 272 residues: Methyl-CpG-binding domain-containing protein 2 (272 aa).

The segment covering 1–15 (MSMSQSRAVQRSSSP) has biased composition (polar residues). The interval 1-24 (MSMSQSRAVQRSSSPNEDRGENQL) is disordered. Residues 53–112 (CPSIGAFTVQCASCFKWRLMPSMQKYEEIREQLLENPFFCDTAREWKPDISCDVPADIYQ) form a CW-type zinc finger. Positions 62-104 (QCASCFKWRLMPSMQKYEEIREQLLENPFFCDTAREWKPDISC) match the MBD-associated domain (MAD) motif. Positions 63, 66, 92, and 104 each coordinate Zn(2+). Residues 118–192 (WAIDKPNISR…SQFSFQIPKP (75 aa)) form the MBD domain. Residues 236-250 (LGTPTESGLNNSHYQ) are compositionally biased toward polar residues. A disordered region spans residues 236-272 (LGTPTESGLNNSHYQPSKKKKTSTLSIFGSNDELADR).

As to quaternary structure, interacts (via MBD domain) with DDM1. In terms of tissue distribution, expressed in buds, flowers, stems, siliques and mature seeds.

The protein localises to the nucleus. Functionally, probable transcriptional regulator. This is Methyl-CpG-binding domain-containing protein 2 (MBD2) from Arabidopsis thaliana (Mouse-ear cress).